The chain runs to 373 residues: CXADR-like membrane protein (373 aa).

Residues 1-17 (MSLFFLWLVSYYVGTLG) form the signal peptide. Ig-like C2-type domains lie at 18–126 (THTE…VILK) and 134–223 (PKCE…VRVT). Topologically, residues 18–234 (THTEIKRVAE…QYVQSIGMVA (217 aa)) are extracellular. Disulfide bonds link Cys34–Cys110 and Cys152–Cys207. N-linked (GlcNAc...) asparagine glycosylation is found at Asn73 and Asn196. A helical transmembrane segment spans residues 235–255 (GAVTGIVAGALLIFLLIWLLI). Residues 256 to 373 (RRKSKDRYEE…PSQSKAFQTV (118 aa)) lie on the Cytoplasmic side of the membrane. Basic and acidic residues predominate over residues 263–280 (YEEEDRPNEIREDAEAPR). The interval 263-373 (YEEEDRPNEI…PSQSKAFQTV (111 aa)) is disordered. 3 stretches are compositionally biased toward low complexity: residues 287 to 313 (SSSS…ASRS), 321 to 332 (AAPQQPGLAPQA), and 353 to 363 (LTKAETTLSTT). The span at 364–373 (PSQSKAFQTV) shows a compositional bias: polar residues.

Predominantly expressed in epithelial cells within different tissues and in the white adipose tissue. Expressed at high levels in the heart and brain, at intermediate levels in the lung, skeletal muscle, kidney and testis and at low levels in the liver and spleen.

It is found in the cell junction. The protein resides in the tight junction. The protein localises to the cell membrane. Functionally, may be involved in the cell-cell adhesion. May play a role in adipocyte differentiation and development of obesity. Is required for normal small intestine development. This chain is CXADR-like membrane protein (Clmp), found in Mus musculus (Mouse).